A 2448-amino-acid polypeptide reads, in one-letter code: Cysteine repeat modular protein 1 (2448 aa).

A helical transmembrane segment spans residues threonine 9–cysteine 29. N-linked (GlcNAc...) asparagine glycans are attached at residues asparagine 48, asparagine 89, asparagine 248, asparagine 284, asparagine 461, asparagine 503, asparagine 542, asparagine 598, and asparagine 619. FU repeat units lie at residues lysine 431–phenylalanine 481, phenylalanine 485–isoleucine 530, asparagine 535–serine 566, and serine 567–alanine 611. 10 FU repeats span residues asparagine 645–proline 694, threonine 698–glutamine 727, aspartate 728–glycine 772, glutamine 775–asparagine 813, lysine 819–serine 868, glycine 904–aspartate 947, glutamine 950–alanine 983, asparagine 984–proline 1027, glutamine 1063–valine 1109, and glutamine 1113–leucine 1144. N-linked (GlcNAc...) asparagine glycosylation is found at asparagine 761 and asparagine 812. Asparagine 934 carries N-linked (GlcNAc...) asparagine glycosylation. An N-linked (GlcNAc...) asparagine glycan is attached at asparagine 1002. An N-linked (GlcNAc...) asparagine glycan is attached at asparagine 1146. The FU 15 repeat unit spans residues glutamine 1147–leucine 1193. An N-linked (GlcNAc...) asparagine glycan is attached at asparagine 1194. FU repeat units follow at residues asparagine 1197–glutamine 1232, glycine 1234–serine 1279, lysine 1281–glutamine 1332, serine 1346–leucine 1394, and asparagine 1402–glutamine 1436. N-linked (GlcNAc...) asparagine glycosylation is found at asparagine 1296, asparagine 1328, and asparagine 1365. Residues asparagine 1506, asparagine 1601, asparagine 1628, and asparagine 1670 are each glycosylated (N-linked (GlcNAc...) asparagine). The 35-residue stretch at serine 1739–glutamine 1773 folds into the EGF-like domain. Cystine bridges form between cysteine 1743–cysteine 1754, cysteine 1748–cysteine 1761, and cysteine 1763–cysteine 1772. 7 N-linked (GlcNAc...) asparagine glycosylation sites follow: asparagine 1800, asparagine 1849, asparagine 1877, asparagine 1942, asparagine 2117, asparagine 2155, and asparagine 2179. 2 helical membrane-spanning segments follow: residues leucine 2201–isoleucine 2221 and isoleucine 2238–valine 2258. Residue asparagine 2260 is glycosylated (N-linked (GlcNAc...) asparagine). 4 consecutive transmembrane segments (helical) span residues serine 2267–phenylalanine 2287, isoleucine 2296–valine 2316, methionine 2352–cysteine 2372, and alanine 2386–glycine 2406.

Its subcellular location is the membrane. Its function is as follows. Required for mucocyst secretion. The sequence is that of Cysteine repeat modular protein 1 from Tetrahymena thermophila (strain SB210).